Here is a 51-residue protein sequence, read N- to C-terminus: Epididymal sperm protein E (51 aa).

Residues 8-39 (CVRCRRKTPSFNSKTVTFRNKRRAIRSHCAYC) fold into a zinc finger.

As to expression, sperm.

The protein localises to the nucleus. This chain is Epididymal sperm protein E, found in Sepia officinalis (Common cuttlefish).